Consider the following 209-residue polypeptide: Outer-membrane lipoprotein LolB (209 aa).

Positions 1 to 17 are cleaved as a signal peptide; it reads MKKSTLLFSLMAMALSG. Cys18 carries N-palmitoyl cysteine lipidation. A lipid anchor (S-diacylglycerol cysteine) is attached at Cys18.

This sequence belongs to the LolB family. Monomer.

The protein resides in the cell outer membrane. In terms of biological role, plays a critical role in the incorporation of lipoproteins in the outer membrane after they are released by the LolA protein. The polypeptide is Outer-membrane lipoprotein LolB (Haemophilus ducreyi (strain 35000HP / ATCC 700724)).